A 283-amino-acid chain; its full sequence is Protein BASIC PENTACYSTEINE5 (283 aa).

The segment at 51-86 is alanine-zipper; sequence AVKERNEAVAATKEALASRDEALEQRDKALSERDNA. Positions 63–89 form a coiled coil; it reads KEALASRDEALEQRDKALSERDNAIME. Residues 122 to 176 are disordered; sequence EESHLPNPSPISTIPPEAANTRPTKRKKESKQGKKMGEDLNRPVASPGKKSRKDW. The span at 151-162 shows a compositional bias: basic and acidic residues; the sequence is SKQGKKMGEDLN.

This sequence belongs to the BBR/BPC family. As to quaternary structure, homodimer. Heterodimer. As to expression, expressed in seedlings, leaves and pistils.

The protein localises to the nucleus. In terms of biological role, transcriptional regulator that specifically binds to GA-rich elements (GAGA-repeats) present in regulatory sequences of genes involved in developmental processes. The chain is Protein BASIC PENTACYSTEINE5 (BPC5) from Arabidopsis thaliana (Mouse-ear cress).